The chain runs to 195 residues: HTH-type transcriptional regulator BetI (195 aa).

An HTH tetR-type domain is found at 8–68; the sequence is SIRRRQLIDA…ATMRDITSQL (61 aa). A DNA-binding region (H-T-H motif) is located at residues 31–50; the sequence is TIAQIARRAGVSTGIISHYF.

The protein operates within amine and polyamine biosynthesis; betaine biosynthesis via choline pathway [regulation]. In terms of biological role, repressor involved in the biosynthesis of the osmoprotectant glycine betaine. It represses transcription of the choline transporter BetT and the genes of BetAB involved in the synthesis of glycine betaine. This chain is HTH-type transcriptional regulator BetI, found in Escherichia coli (strain SMS-3-5 / SECEC).